The sequence spans 533 residues: Lysophosphatidylcholine acyltransferase (533 aa).

Residues 1–79 are Cytoplasmic-facing; the sequence is MTTSTIKPTG…VLTVLLLPIR (79 aa). Residues 80-100 form a helical; Signal-anchor for type II membrane protein membrane-spanning segment; that stretch reads VVGCVLSLISAWMFACIGLYG. The Lumenal segment spans residues 101–533; sequence MTLDDLKAKP…PKAVVTTAEN (433 aa). The HXXXXD motif signature appears at 158–163; sequence HSSYVD. EF-hand domains are found at residues 402–437, 439–474, and 475–510; these read LKNT…CKLK, SDLL…AGGK, and LNEQ…QKSS.

It belongs to the 1-acyl-sn-glycerol-3-phosphate acyltransferase family.

Its subcellular location is the endoplasmic reticulum membrane. It is found in the golgi apparatus membrane. The protein resides in the lipid droplet. The enzyme catalyses a 1-acyl-sn-glycero-3-phosphocholine + an acyl-CoA = a 1,2-diacyl-sn-glycero-3-phosphocholine + CoA. It functions in the pathway lipid metabolism; phospholipid metabolism. Functionally, acetyltransferase which mediates the conversion of 1-acyl-sn-glycero-3-phosphocholine (LPC) into phosphatidylcholine (PC). Has a calcium-independent activity. Displays a clear preference for saturated fatty acyl-CoAs, and 1-myristoyl or 1-palmitoyl LPC as acyl donors and acceptors, respectively. Involved in the regulation of lipid droplet number and size. This chain is Lysophosphatidylcholine acyltransferase, found in Drosophila melanogaster (Fruit fly).